Here is a 694-residue protein sequence, read N- to C-terminus: Type VI secretion system spike protein VgrG2 (694 aa).

The protein belongs to the VgrG protein family.

The protein localises to the secreted. Part of the type VI secretion system specialized secretion system, which delivers several virulence factors in both prokaryotic and eukaryotic cells during infection. Forms the spike at the tip of the elongating tube formed by haemolysin co-regulated protein Hcp. Allows the delivery of the VasX antibacterial toxin to target cells where it exerts its toxicity. The sequence is that of Type VI secretion system spike protein VgrG2 (vgrG2) from Vibrio cholerae serotype O1 (strain ATCC 39315 / El Tor Inaba N16961).